The sequence spans 337 residues: Monoacylglycerol lipase ABHD6 (337 aa).

At 1–19 (MDLDVVNMFVIAGGTLALP) the chain is on the extracellular side. A helical; Signal-anchor for type II membrane protein membrane pass occupies residues 20–42 (ILAFVASFLLWPSALIRIYYWYW). Over 43–337 (RRTLGMQVRY…HSTDNSKKLD (295 aa)) the chain is Cytoplasmic. The AB hydrolase-1 domain maps to 72 to 313 (PSILMLHGFS…CGHSVVMERP (242 aa)). Serine 148 acts as the Nucleophile in catalysis. Residues aspartate 278 and histidine 306 each act as charge relay system in the active site.

The protein belongs to the AB hydrolase superfamily.

It localises to the late endosome membrane. The protein localises to the lysosome membrane. It is found in the mitochondrion membrane. It catalyses the reaction Hydrolyzes glycerol monoesters of long-chain fatty acids.. It carries out the reaction 1-octanoylglycerol + H2O = octanoate + glycerol + H(+). The catalysed reaction is 1-decanoylglycerol + H2O = decanoate + glycerol + H(+). The enzyme catalyses 1-dodecanoylglycerol + H2O = dodecanoate + glycerol + H(+). It catalyses the reaction 1-tetradecanoylglycerol + H2O = tetradecanoate + glycerol + H(+). It carries out the reaction 2-hexadecanoylglycerol + H2O = glycerol + hexadecanoate + H(+). The catalysed reaction is 2-(9Z-octadecenoyl)-glycerol + H2O = glycerol + (9Z)-octadecenoate + H(+). The enzyme catalyses 1-(9Z-octadecenoyl)-glycerol + H2O = glycerol + (9Z)-octadecenoate + H(+). It catalyses the reaction 2-(9Z,12Z-octadecadienoyl)-glycerol + H2O = (9Z,12Z)-octadecadienoate + glycerol + H(+). It carries out the reaction 2-(5Z,8Z,11Z,14Z-eicosatetraenoyl)-glycerol + H2O = glycerol + (5Z,8Z,11Z,14Z)-eicosatetraenoate + H(+). The catalysed reaction is 1-(5Z,8Z,11Z,14Z-eicosatetraenoyl)-glycerol + H2O = glycerol + (5Z,8Z,11Z,14Z)-eicosatetraenoate + H(+). The enzyme catalyses 1-(9Z,12Z-octadecadienoyl)-glycerol + H2O = (9Z,12Z)-octadecadienoate + glycerol + H(+). It catalyses the reaction 3-(9Z-octadecenoyl)-sn-glycero-1-phospho-(3'-(9Z-octadecenoyl)-1'-sn-glycerol) + H2O = 3-(9Z-octadecenoyl)-sn-glycero-1-phospho-(1'-sn-glycerol) + (9Z)-octadecenoate + H(+). It carries out the reaction (S,S)-2-(9Z-octadecenoyl)-sn-glycero-1-phospho-(2'-(9Z-octadecenoyl)-1'-sn-glycerol) + H2O = (S,S)-2-(9Z-octadecenoyl)-sn-glycero-1-phospho-(1'-sn-glycerol) + (9Z)-octadecenoate + H(+). The catalysed reaction is (R,R)-2-(9Z-octadecenoyl)-sn-glycero-3-phospho-(2'-(9Z-octadecenoyl)-3'-sn-glycerol) + H2O = (R,R)-2-(9Z-octadecenoyl)-sn-glycero-3-phospho-(3'-sn-glycerol) + (9Z)-octadecenoate + H(+). Lipase that preferentially hydrolysis medium-chain saturated monoacylglycerols including 2-arachidonoylglycerol. Through 2-arachidonoylglycerol degradation may regulate endocannabinoid signaling pathways. Also has a lysophosphatidyl lipase activity with a preference for lysophosphatidylglycerol among other lysophospholipids. Also able to degrade bis(monoacylglycero)phosphate (BMP) and constitutes the major enzyme for BMP catabolism. BMP, also known as lysobisphosphatidic acid, is enriched in late endosomes and lysosomes and plays a key role in the formation of intraluminal vesicles and in lipid sorting. In Bos taurus (Bovine), this protein is Monoacylglycerol lipase ABHD6.